The following is a 681-amino-acid chain: Sodium-dependent phosphate transporter 1 (681 aa).

The next 6 helical transmembrane spans lie at 25-45, 66-86, 106-126, 162-182, 207-227, and 234-254; these read YLWM…SVGA, ACIL…AKVS, LMAG…VASF, IVMS…ILFF, ACTV…LLGF, and GTIL…WFFV. Residues S269 and S273 each carry the phosphoserine modification. The tract at residues 269 to 296 is disordered; the sequence is SPSESPLMEKKNSLKEDHEETKLSVSDI. A compositionally biased stretch (basic and acidic residues) spans 275-290; it reads LMEKKNSLKEDHEETK. 4 helical membrane passes run 515–535, 562–582, 604–624, and 654–674; these read VSLL…FAHG, VATP…GLWV, FSIE…GLPI, and IFMA…AIMA. The segment at 554–562 is a; sequence DTGDVSSKV.

This sequence belongs to the inorganic phosphate transporter (PiT) (TC 2.A.20) family.

Its subcellular location is the cell membrane. The catalysed reaction is 2 Na(+)(out) + phosphate(out) = 2 Na(+)(in) + phosphate(in). In terms of biological role, sodium-phosphate symporter which preferentially transports the monovalent form of phosphate with a stoichiometry of two sodium ions per phosphate ion. May play a role in extracellular matrix and cartilage calcification as well as in vascular calcification. Essential for cell proliferation but this function is independent of its phosphate transporter activity. This is Sodium-dependent phosphate transporter 1 (Slc20a1) from Felis catus (Cat).